The sequence spans 297 residues: Carboxysome assembly protein CcmO (297 aa).

The disordered stretch occupies residues 1–29 (MPTSPTMTSVPIARSPRPSYQQINQHQPS). Polar residues predominate over residues 18 to 29 (PSYQQINQHQPS). BMC domains are found at residues 32 to 116 (ALGL…AVFP) and 138 to 222 (SIGL…HTLP).

It belongs to the bacterial microcompartments protein family. As to quaternary structure, homooligomerizes, possibly as a trimer, interacts with CcmK in the carboxysome.

The protein localises to the carboxysome. Functionally, required for formation of the carboxysome, a polyhedral inclusion where RuBisCO (ribulose bisphosphate carboxylase, rbcL-rbcS) is sequestered. Required for recruitment of major shell protein CcmK2 to the pre-carboxysome. Suggested to be a carboxysome shell protein. The protein is Carboxysome assembly protein CcmO of Synechocystis sp. (strain ATCC 27184 / PCC 6803 / Kazusa).